A 206-amino-acid polypeptide reads, in one-letter code: Large ribosomal subunit protein uL4 (206 aa).

The protein belongs to the universal ribosomal protein uL4 family. Part of the 50S ribosomal subunit.

One of the primary rRNA binding proteins, this protein initially binds near the 5'-end of the 23S rRNA. It is important during the early stages of 50S assembly. It makes multiple contacts with different domains of the 23S rRNA in the assembled 50S subunit and ribosome. Functionally, forms part of the polypeptide exit tunnel. The protein is Large ribosomal subunit protein uL4 of Rhodopseudomonas palustris (strain BisB18).